Consider the following 168-residue polypeptide: Crossover junction endodeoxyribonuclease RuvC (168 aa).

Residues aspartate 9, glutamate 69, and aspartate 141 contribute to the active site. Residues aspartate 9, glutamate 69, and aspartate 141 each coordinate Mg(2+).

The protein belongs to the RuvC family. As to quaternary structure, homodimer which binds Holliday junction (HJ) DNA. The HJ becomes 2-fold symmetrical on binding to RuvC with unstacked arms; it has a different conformation from HJ DNA in complex with RuvA. In the full resolvosome a probable DNA-RuvA(4)-RuvB(12)-RuvC(2) complex forms which resolves the HJ. Mg(2+) serves as cofactor.

The protein localises to the cytoplasm. The catalysed reaction is Endonucleolytic cleavage at a junction such as a reciprocal single-stranded crossover between two homologous DNA duplexes (Holliday junction).. The RuvA-RuvB-RuvC complex processes Holliday junction (HJ) DNA during genetic recombination and DNA repair. Endonuclease that resolves HJ intermediates. Cleaves cruciform DNA by making single-stranded nicks across the HJ at symmetrical positions within the homologous arms, yielding a 5'-phosphate and a 3'-hydroxyl group; requires a central core of homology in the junction. The consensus cleavage sequence is 5'-(A/T)TT(C/G)-3'. Cleavage occurs on the 3'-side of the TT dinucleotide at the point of strand exchange. HJ branch migration catalyzed by RuvA-RuvB allows RuvC to scan DNA until it finds its consensus sequence, where it cleaves and resolves the cruciform DNA. The chain is Crossover junction endodeoxyribonuclease RuvC from Bdellovibrio bacteriovorus (strain ATCC 15356 / DSM 50701 / NCIMB 9529 / HD100).